A 246-amino-acid polypeptide reads, in one-letter code: Putative L,D-transpeptidase YafK (246 aa).

A signal peptide spans 1–19 (MRKIALILAMLLIPCVSFA). Positions 44–174 (VYIQIFKEER…GQPSVQVSIY (131 aa)) constitute a L,D-TPase catalytic domain. Catalysis depends on H135, which acts as the Proton donor/acceptor. The Nucleophile role is filled by C143.

Belongs to the YkuD family.

It participates in cell wall biogenesis; peptidoglycan biosynthesis. This chain is Putative L,D-transpeptidase YafK (yafK), found in Escherichia coli O157:H7.